The chain runs to 148 residues: UPF0756 membrane protein ETA_17460 (148 aa).

4 helical membrane-spanning segments follow: residues 14-34, 51-71, 80-100, and 112-132; these read ALSY…LIVI, MTVG…SGTI, FLHW…WLGG, and VVGG…GVPV.

It belongs to the UPF0756 family.

It is found in the cell membrane. In Erwinia tasmaniensis (strain DSM 17950 / CFBP 7177 / CIP 109463 / NCPPB 4357 / Et1/99), this protein is UPF0756 membrane protein ETA_17460.